The primary structure comprises 414 residues: Histidine--tRNA ligase (414 aa).

The protein belongs to the class-II aminoacyl-tRNA synthetase family. As to quaternary structure, homodimer.

It is found in the cytoplasm. The catalysed reaction is tRNA(His) + L-histidine + ATP = L-histidyl-tRNA(His) + AMP + diphosphate + H(+). This Rickettsia conorii (strain ATCC VR-613 / Malish 7) protein is Histidine--tRNA ligase.